The chain runs to 588 residues: Transcription factor tau 60 kDa subunit (588 aa).

Residues L399–M588 form a sufficient for SPT15-binding region.

Heterodimer with TFC6. Component of the TFIIIC complex composed of TFC1, TFC3, TFC4, TFC6, TFC7 and TFC8. The subunits are organized in two globular domains, tauA and tauB, connected by a proteolysis-sensitive and flexible linker. Interacts with SPT15 and directly with TFC6.

It is found in the nucleus. In terms of biological role, TFIIIC mediates tRNA and 5S RNA gene activation by binding to intragenic promoter elements. Upstream of the transcription start site, TFIIIC assembles the initiation complex TFIIIB-TFIIIC-tDNA, which is sufficient for RNA polymerase III recruitment and function. Part of the tauB domain of TFIIIC that binds boxB DNA promoter sites of tRNA and similar genes. Plays a role in TFIIB assembly through its interaction with SPT15/TBP. Essential for cell viability. The protein is Transcription factor tau 60 kDa subunit (TFC8) of Saccharomyces cerevisiae (strain ATCC 204508 / S288c) (Baker's yeast).